The primary structure comprises 564 residues: Eukaryotic translation initiation factor 3 subunit L (564 aa).

At Ser-2 the chain carries N-acetylserine. Ser-21 is subject to Phosphoserine. In terms of domain architecture, PCI spans 331–537; that stretch reads DAIRVFANIL…IHIADTKVAR (207 aa). N6-acetyllysine occurs at positions 465 and 549.

The protein belongs to the eIF-3 subunit L family. Component of the eukaryotic translation initiation factor 3 (eIF-3) complex, which is composed of 13 subunits: EIF3A, EIF3B, EIF3C, EIF3D, EIF3E, EIF3F, EIF3G, EIF3H, EIF3I, EIF3J, EIF3K, EIF3L and EIF3M. The eIF-3 complex appears to include 3 stable modules: module A is composed of EIF3A, EIF3B, EIF3G and EIF3I; module B is composed of EIF3F, EIF3H, and EIF3M; and module C is composed of EIF3C, EIF3D, EIF3E, EIF3K and EIF3L. EIF3C of module C binds EIF3B of module A and EIF3H of module B, thereby linking the three modules. EIF3J is a labile subunit that binds to the eIF-3 complex via EIF3B. The eIF-3 complex interacts with RPS6KB1 under conditions of nutrient depletion. Mitogenic stimulation leads to binding and activation of a complex composed of MTOR and RPTOR, leading to phosphorylation and release of RPS6KB1 and binding of EIF4B to eIF-3. Interacts with RRN3.

The protein resides in the cytoplasm. Its function is as follows. Component of the eukaryotic translation initiation factor 3 (eIF-3) complex, which is required for several steps in the initiation of protein synthesis. The eIF-3 complex associates with the 40S ribosome and facilitates the recruitment of eIF-1, eIF-1A, eIF-2:GTP:methionyl-tRNAi and eIF-5 to form the 43S pre-initiation complex (43S PIC). The eIF-3 complex stimulates mRNA recruitment to the 43S PIC and scanning of the mRNA for AUG recognition. The eIF-3 complex is also required for disassembly and recycling of post-termination ribosomal complexes and subsequently prevents premature joining of the 40S and 60S ribosomal subunits prior to initiation. The eIF-3 complex specifically targets and initiates translation of a subset of mRNAs involved in cell proliferation, including cell cycling, differentiation and apoptosis, and uses different modes of RNA stem-loop binding to exert either translational activation or repression. The chain is Eukaryotic translation initiation factor 3 subunit L from Pan troglodytes (Chimpanzee).